A 383-amino-acid chain; its full sequence is Cytochrome b (383 aa).

The next 4 membrane-spanning stretches (helical) occupy residues 35 to 55 (FGSILGIFLMIQIISGFILSM), 79 to 100 (WLFRLIHMNGASFYFLMMYIHI), 115 to 135 (WGIGIMILLMSMAAAFMGYVL), and 180 to 200 (FFSLHFILPLLILFMVILHLF). Residues H85 and H99 each contribute to the heme b site. Heme b contacts are provided by H184 and H198. An a ubiquinone-binding site is contributed by H203. Transmembrane regions (helical) follow at residues 228-248 (IKDLLGFYIILFIFMFINFQF), 290-310 (LGGVIGLVMSILILYIMIFYN), 321-341 (LNKIYYWMFINNFILLTWLGK), and 348-368 (FTNINMLFTTTYFLYFFLNFY).

It belongs to the cytochrome b family. The main subunits of complex b-c1 are: cytochrome b, cytochrome c1 and the Rieske protein. Requires heme b as cofactor.

The protein localises to the mitochondrion inner membrane. Functionally, component of the ubiquinol-cytochrome c reductase complex (complex III or cytochrome b-c1 complex) that is part of the mitochondrial respiratory chain. The b-c1 complex mediates electron transfer from ubiquinol to cytochrome c. Contributes to the generation of a proton gradient across the mitochondrial membrane that is then used for ATP synthesis. This is Cytochrome b (MT-CYB) from Apis mellifera ligustica (Common honeybee).